The following is a 332-amino-acid chain: Protein FAM131B (332 aa).

The disordered stretch occupies residues M1–T22. Phosphoserine occurs at positions 47, 114, and 117. A disordered region spans residues L221–N332. Composition is skewed to basic and acidic residues over residues P272–A281 and A288–P302. Phosphoserine is present on residues S295, S297, and S313. Position 316 is a phosphothreonine (T316). S317, S318, and S322 each carry phosphoserine. Residues F323–N332 show a composition bias toward acidic residues.

This sequence belongs to the FAM131 family.

The chain is Protein FAM131B (Fam131b) from Rattus norvegicus (Rat).